A 119-amino-acid chain; its full sequence is MORF4 family associated protein 1 like 2 (119 aa).

Basic and acidic residues predominate over residues 1 to 16 (MRPVDADEAREPREEP). Positions 1–36 (MRPVDADEAREPREEPGSPLSPAPRAGRENLASLER) are disordered.

Belongs to the MORF4 family-associated protein family. In terms of assembly, may interact with CDK2AP1.

May play a role in cell proliferation. The polypeptide is MORF4 family associated protein 1 like 2 (Homo sapiens (Human)).